The sequence spans 161 residues: General odorant-binding protein 2 (161 aa).

A signal peptide spans 1-20 (MVNRLILMVVVVFITDSVMG). Intrachain disulfides connect Cys39–Cys74, Cys70–Cys128, and Cys117–Cys137.

Belongs to the PBP/GOBP family. As to quaternary structure, homodimer. As to expression, olfactory tissue; expressed by the glia-like support cells that ensheathe the sensory neurons and line the base of the sensillum lumen.

Functionally, present in the aqueous fluid surrounding olfactory sensory dendrites and are thought to aid in the capture and transport of hydrophobic odorants into and through this fluid. In Manduca sexta (Tobacco hawkmoth), this protein is General odorant-binding protein 2 (GOBP2).